Reading from the N-terminus, the 202-residue chain is NADH-quinone oxidoreductase subunit J (202 aa).

The next 5 helical transmembrane spans lie at 3 to 23 (VFVFAFYLFAVVAVVAGLMVV), 31 to 51 (AVLWLILTFLSAAGLFVLMGA), 53 to 73 (FVAMLLIIVYVGAVAVLFLFV), 93 to 113 (PVGGLIALVMLAQLATGLMVW), and 146 to 166 (LYLFQGAGLVLLVAMIGAILL).

It belongs to the complex I subunit 6 family. In terms of assembly, NDH-1 is composed of 14 different subunits. Subunits NuoA, H, J, K, L, M, N constitute the membrane sector of the complex.

It localises to the cellular chromatophore membrane. The catalysed reaction is a quinone + NADH + 5 H(+)(in) = a quinol + NAD(+) + 4 H(+)(out). Functionally, NDH-1 shuttles electrons from NADH, via FMN and iron-sulfur (Fe-S) centers, to quinones in the respiratory chain. The immediate electron acceptor for the enzyme in this species is believed to be ubiquinone. Couples the redox reaction to proton translocation (for every two electrons transferred, four hydrogen ions are translocated across the cytoplasmic membrane), and thus conserves the redox energy in a proton gradient. This Rhodobacter capsulatus (Rhodopseudomonas capsulata) protein is NADH-quinone oxidoreductase subunit J (nuoJ).